Here is a 296-residue protein sequence, read N- to C-terminus: Hca operon transcriptional activator HcaR (296 aa).

Residues 1–58 (MELRHLRYFVAVAQALNFTRAAEKLHTSQPSLSSQIRDLENCVGVPLLVRDKRKVALT) enclose the HTH lysR-type domain. Residues 18-38 (FTRAAEKLHTSQPSLSSQIRD) constitute a DNA-binding region (H-T-H motif).

The protein belongs to the LysR transcriptional regulatory family.

Its function is as follows. Transcriptional activator of the hca operon for 3-phenylpropionic acid catabolism. The sequence is that of Hca operon transcriptional activator HcaR (hcaR) from Escherichia coli (strain K12).